We begin with the raw amino-acid sequence, 257 residues long: 5'-nucleotidase SurE (257 aa).

A divalent metal cation contacts are provided by Asp-11, Asp-12, Ser-42, and Asn-99.

The protein belongs to the SurE nucleotidase family. Requires a divalent metal cation as cofactor.

The protein localises to the cytoplasm. The catalysed reaction is a ribonucleoside 5'-phosphate + H2O = a ribonucleoside + phosphate. Nucleotidase that shows phosphatase activity on nucleoside 5'-monophosphates. In Flavobacterium psychrophilum (strain ATCC 49511 / DSM 21280 / CIP 103535 / JIP02/86), this protein is 5'-nucleotidase SurE.